The chain runs to 274 residues: MSASGEISTPRDYIGHHLNHLQLDLRTFELVNPHSTGPATFWTLNIDSLFFSVVLGLAFLLVFRKVAASATSGVPGKLQTAVELIIGFVDNSVRDMYHGKSKVIAPLALTVFVWVLLMNMMDLLPIDLLPYIGEHVFGLPALRVVPTADVSITLSMALGVFILIIFYSIKMKGVGGFTKELTMQPFYHPIFIPVNLILEGVSLLSKPLSLGLRLFGNMYAGELIFILIAGLLPWWSQWMLSVPWAIFHILIITLQAFIFMVLTIVYLSMASEEH.

Transmembrane regions (helical) follow at residues 43–63 (TLNI…LLVF), 103–123 (VIAP…MMDL), 149–169 (DVSI…FYSI), 223–243 (LIFI…LSVP), and 245–265 (AIFH…LTIV).

Belongs to the ATPase A chain family. F-type ATPases have 2 components, CF(1) - the catalytic core - and CF(0) - the membrane proton channel. CF(1) has five subunits: alpha(3), beta(3), gamma(1), delta(1), epsilon(1). CF(0) has three main subunits: a(1), b(2) and c(9-12). The alpha and beta chains form an alternating ring which encloses part of the gamma chain. CF(1) is attached to CF(0) by a central stalk formed by the gamma and epsilon chains, while a peripheral stalk is formed by the delta and b chains.

Its subcellular location is the cell inner membrane. Functionally, key component of the proton channel; it plays a direct role in the translocation of protons across the membrane. This chain is ATP synthase subunit a, found in Yersinia pestis bv. Antiqua (strain Angola).